The chain runs to 206 residues: Pyridoxine/pyridoxamine 5'-phosphate oxidase (206 aa).

FMN-binding positions include 53 to 58, 68 to 69, Lys-75, and Gln-97; these read RMVLLK and YT. Lys-58 contributes to the substrate binding site. Residues Tyr-115, Arg-119, and Ser-123 each coordinate substrate. FMN is bound by residues 132 to 133 and Trp-177; that span reads QS. Residue 183 to 185 participates in substrate binding; the sequence is RLH. Residue Arg-187 coordinates FMN.

The protein belongs to the pyridoxamine 5'-phosphate oxidase family. As to quaternary structure, homodimer. The cofactor is FMN.

It catalyses the reaction pyridoxamine 5'-phosphate + O2 + H2O = pyridoxal 5'-phosphate + H2O2 + NH4(+). The enzyme catalyses pyridoxine 5'-phosphate + O2 = pyridoxal 5'-phosphate + H2O2. The protein operates within cofactor metabolism; pyridoxal 5'-phosphate salvage; pyridoxal 5'-phosphate from pyridoxamine 5'-phosphate: step 1/1. It functions in the pathway cofactor metabolism; pyridoxal 5'-phosphate salvage; pyridoxal 5'-phosphate from pyridoxine 5'-phosphate: step 1/1. Functionally, catalyzes the oxidation of either pyridoxine 5'-phosphate (PNP) or pyridoxamine 5'-phosphate (PMP) into pyridoxal 5'-phosphate (PLP). This Rhizobium leguminosarum bv. trifolii (strain WSM2304) protein is Pyridoxine/pyridoxamine 5'-phosphate oxidase.